Here is a 360-residue protein sequence, read N- to C-terminus: Histidinol-phosphate aminotransferase (360 aa).

The residue at position 221 (lysine 221) is an N6-(pyridoxal phosphate)lysine.

Belongs to the class-II pyridoxal-phosphate-dependent aminotransferase family. Histidinol-phosphate aminotransferase subfamily. In terms of assembly, homodimer. Pyridoxal 5'-phosphate is required as a cofactor.

The enzyme catalyses L-histidinol phosphate + 2-oxoglutarate = 3-(imidazol-4-yl)-2-oxopropyl phosphate + L-glutamate. The protein operates within amino-acid biosynthesis; L-histidine biosynthesis; L-histidine from 5-phospho-alpha-D-ribose 1-diphosphate: step 7/9. The sequence is that of Histidinol-phosphate aminotransferase from Desulfitobacterium hafniense (strain DSM 10664 / DCB-2).